The following is a 191-amino-acid chain: Thymidine kinase (191 aa).

ATP is bound by residues 9 to 16 (GTMNSGKT) and 85 to 88 (DEAQ). E86 serves as the catalytic Proton acceptor. Residues C143, C146, C180, and H183 each contribute to the Zn(2+) site.

This sequence belongs to the thymidine kinase family. As to quaternary structure, homotetramer.

The protein resides in the cytoplasm. The catalysed reaction is thymidine + ATP = dTMP + ADP + H(+). This is Thymidine kinase from Streptococcus gordonii (strain Challis / ATCC 35105 / BCRC 15272 / CH1 / DL1 / V288).